The primary structure comprises 217 residues: Ras-related protein Rab-19 (217 aa).

GTP contacts are provided by serine 26, valine 28, glycine 29, lysine 30, threonine 31, cysteine 32, tyrosine 42, serine 43, glutamate 44, serine 45, and threonine 49. Threonine 31 is a binding site for Mg(2+). The short motif at 39–54 (SGVYSESQQNTIGVDF) is the Switch 1 element. Threonine 49 and aspartate 72 together coordinate Mg(2+). The Switch 2 signature appears at 74–89 (AGQERFRTITQSYYRS). GTP-binding residues include glycine 75, asparagine 130, lysine 131, aspartate 133, serine 161, alanine 162, and lysine 163. Residues cysteine 215 and cysteine 217 are each lipidated (S-geranylgeranyl cysteine). At cysteine 217 the chain carries Cysteine methyl ester.

This sequence belongs to the small GTPase superfamily. Rab family. Requires Mg(2+) as cofactor.

It localises to the cell membrane. It carries out the reaction GTP + H2O = GDP + phosphate + H(+). Regulated by guanine nucleotide exchange factors (GEFs) which promote the exchange of bound GDP for free GTP. Regulated by GTPase activating proteins (GAPs) which increase the GTP hydrolysis activity. Inhibited by GDP dissociation inhibitors (GDIs). In terms of biological role, the small GTPases Rab are key regulators of intracellular membrane trafficking, from the formation of transport vesicles to their fusion with membranes. Rabs cycle between an inactive GDP-bound form and an active GTP-bound form that is able to recruit to membranes different set of downstream effectors directly responsible for vesicle formation, movement, tethering and fusion. The chain is Ras-related protein Rab-19 from Rattus norvegicus (Rat).